The following is a 423-amino-acid chain: Tyrosine--tRNA ligase (423 aa).

Tyr-35 provides a ligand contact to L-tyrosine. The short motif at 40–49 (PTAPSLHAGH) is the 'HIGH' region element. L-tyrosine-binding residues include Tyr-170 and Gln-174. Residues 230–234 (KFGKS) carry the 'KMSKS' region motif. Lys-233 serves as a coordination point for ATP. An S4 RNA-binding domain is found at 355-412 (DLITDLLVATGLSASKGAARRTIAEGGVSVNNMKIDSDEWTPQASDFLHGRWLVLRRG).

The protein belongs to the class-I aminoacyl-tRNA synthetase family. TyrS type 1 subfamily. Homodimer.

Its subcellular location is the cytoplasm. The catalysed reaction is tRNA(Tyr) + L-tyrosine + ATP = L-tyrosyl-tRNA(Tyr) + AMP + diphosphate + H(+). Functionally, catalyzes the attachment of tyrosine to tRNA(Tyr) in a two-step reaction: tyrosine is first activated by ATP to form Tyr-AMP and then transferred to the acceptor end of tRNA(Tyr). The sequence is that of Tyrosine--tRNA ligase from Mycobacterium sp. (strain KMS).